Reading from the N-terminus, the 190-residue chain is dCTP deaminase (190 aa).

Residues 111–116 (KSTYAR), 135–137 (TLE), Gln-156, Tyr-172, and Gln-182 contribute to the dCTP site. Glu-137 functions as the Proton donor/acceptor in the catalytic mechanism.

This sequence belongs to the dCTP deaminase family. Homotrimer.

The catalysed reaction is dCTP + H2O + H(+) = dUTP + NH4(+). It functions in the pathway pyrimidine metabolism; dUMP biosynthesis; dUMP from dCTP (dUTP route): step 1/2. In terms of biological role, catalyzes the deamination of dCTP to dUTP. The sequence is that of dCTP deaminase from Stenotrophomonas maltophilia (strain R551-3).